Reading from the N-terminus, the 325-residue chain is Exogastrula-inducing polypeptide (325 aa).

The first 19 residues, 1–19, serve as a signal peptide directing secretion; it reads MKVSLVLLIAVFGLAMVAA. A propeptide spanning residues 20–45 is cleaved from the precursor; sequence EETLESKLQMALKSLLQENEELNLEG. 2 consecutive EGF-like domains span residues 48–91 and 107–154; these read TKGG…SSCY and TVAR…GGCS. Intrachain disulfides connect Cys52–Cys65, Cys59–Cys75, Cys77–Cys90, Cys111–Cys124, Cys118–Cys138, and Cys140–Cys153. The propeptide occupies 160-177; that stretch reads ELEYLSYVARDVEMEMLA. Positions 180–226 constitute an EGF-like 3 domain; that stretch reads SVYQCNRDTNSCDGFGKCEKSTFGRTTGQYICNCDDGYRNNAYGGCS. Intrachain disulfides connect Cys184–Cys197, Cys191–Cys211, and Cys213–Cys225. The propeptide occupies 232 to 249; it reads EIEYLSMIARDQELEMQA. Residues 252–298 enclose the EGF-like 4 domain; the sequence is SLPQCNRDTNYCDGFGQCVKSTFGRTTGQYICSCNDGYENNLYGGCS. 3 cysteine pairs are disulfide-bonded: Cys256-Cys269, Cys263-Cys283, and Cys285-Cys297. The propeptide occupies 313–325; that stretch reads MEILRSLANLLEE.

The protein localises to the secreted. The protein resides in the extracellular space. Its subcellular location is the extracellular matrix. Its function is as follows. The EGIP peptides are factors effective to extrude the archenteron toward outside of embryos. May have a role in the induction of gastrulation. In Heliocidaris crassispina (Sea urchin), this protein is Exogastrula-inducing polypeptide.